Consider the following 592-residue polypeptide: Probable tubulin polyglutamylase TTLL2 (592 aa).

Disordered stretches follow at residues 1 to 23 (MRGR…TTTP) and 51 to 77 (GVSI…MAED). The segment covering 7-23 (CSSTQSQALGSLRTTTP) has biased composition (polar residues). Residues 84–427 (LKPLVFRVDE…NGLRNEGREA (344 aa)) form the TTL domain. ATP contacts are provided by residues lysine 212, 218–219 (RG), 240–243 (QKYI), and 253–255 (KCD). Arginine 218 provides a ligand contact to a protein. L-glutamate is bound at residue arginine 279. Residue 298–299 (TN) participates in ATP binding. L-glutamate-binding residues include serine 301 and lysine 321. Residues aspartate 373, glutamate 386, and asparagine 388 each contribute to the Mg(2+) site. Lysine 404 contacts L-glutamate.

The protein belongs to the tubulin--tyrosine ligase family. Mg(2+) is required as a cofactor. As to expression, testis.

Its function is as follows. Probable tubulin polyglutamylase that generates side chains of glutamate on the gamma-carboxyl group of specific glutamate residues within the C-terminal tail of target proteins. Similar to TTLL1, may acquire enzymatic activity only in complex with other proteins as it is most likely lacking domains important for autonomous activity. Probably involved in the side-chain initiation step of the polyglutamylation reaction rather than the elongation step. This Homo sapiens (Human) protein is Probable tubulin polyglutamylase TTLL2.